The chain runs to 199 residues: dITP/XTP pyrophosphatase (199 aa).

7-12 (TTNLHK) serves as a coordination point for substrate. 2 residues coordinate Mg(2+): Glu41 and Asp70. The active-site Proton acceptor is Asp70. Residues Ser71, 154–157 (FGYD), Lys177, and 182–183 (HR) each bind substrate.

The protein belongs to the HAM1 NTPase family. As to quaternary structure, homodimer. The cofactor is Mg(2+).

It carries out the reaction XTP + H2O = XMP + diphosphate + H(+). The enzyme catalyses dITP + H2O = dIMP + diphosphate + H(+). The catalysed reaction is ITP + H2O = IMP + diphosphate + H(+). Functionally, pyrophosphatase that catalyzes the hydrolysis of nucleoside triphosphates to their monophosphate derivatives, with a high preference for the non-canonical purine nucleotides XTP (xanthosine triphosphate), dITP (deoxyinosine triphosphate) and ITP. Seems to function as a house-cleaning enzyme that removes non-canonical purine nucleotides from the nucleotide pool, thus preventing their incorporation into DNA/RNA and avoiding chromosomal lesions. In Protochlamydia amoebophila (strain UWE25), this protein is dITP/XTP pyrophosphatase.